A 90-amino-acid polypeptide reads, in one-letter code: RNA-binding protein Hfq (90 aa).

The Sm domain occupies 9 to 69 (DRFLNHLRVN…ISTIIPSSYV (61 aa)).

The protein belongs to the Hfq family. As to quaternary structure, homohexamer.

In terms of biological role, RNA chaperone that binds small regulatory RNA (sRNAs) and mRNAs to facilitate mRNA translational regulation in response to envelope stress, environmental stress and changes in metabolite concentrations. Also binds with high specificity to tRNAs. The protein is RNA-binding protein Hfq of Thermotoga petrophila (strain ATCC BAA-488 / DSM 13995 / JCM 10881 / RKU-1).